We begin with the raw amino-acid sequence, 451 residues long: C4-dicarboxylate transport protein (451 aa).

The next 9 helical transmembrane spans lie at 17 to 37 (SLYVQVLFAVVVGVLLGHFYP), 53 to 73 (LIKMIIAPIIFCTVVVGIAGM), 85 to 105 (LALLYFEIVSSVALVIGLIVV), 153 to 173 (AFAKGEILQVLLIAVMFGFAL), 193 to 213 (VLFTIVGYIMKVAPIGAFGAM), 231 to 251 (LMGSFYLTCLLFVFVVLGLIA), 306 to 326 (GYSFNLDGTSIYLTMAAVFIA), 339 to 359 (ITLLLVLLLTSKGAAGITGSG), and 361 to 381 (IVLAATLSAVGHVPVAGLALI).

Belongs to the dicarboxylate/amino acid:cation symporter (DAACS) (TC 2.A.23) family.

It localises to the cell inner membrane. Its function is as follows. Responsible for the transport of dicarboxylates such as succinate, fumarate, and malate from the periplasm across the membrane. The chain is C4-dicarboxylate transport protein from Paracidovorax citrulli (strain AAC00-1) (Acidovorax citrulli).